Reading from the N-terminus, the 397-residue chain is Lysophospholipid transporter LplT (397 aa).

Residues methionine 1 to lysine 17 are Periplasmic-facing. Residues alanine 18–leucine 38 form a helical membrane-spanning segment. Topologically, residues alanine 39–proline 52 are cytoplasmic. A helical transmembrane segment spans residues isoleucine 53–alanine 73. Residues aspartate 74–leucine 90 lie on the Periplasmic side of the membrane. A helical transmembrane segment spans residues leucine 91–valine 111. Residues glycine 112–threonine 144 are Cytoplasmic-facing. The chain crosses the membrane as a helical span at residues isoleucine 145–valine 165. A topological domain (periplasmic) is located at residue alanine 166. A helical transmembrane segment spans residues leucine 167–leucine 187. The Cytoplasmic portion of the chain corresponds to alanine 188–serine 226. A helical membrane pass occupies residues leucine 227 to leucine 247. At glycine 248 to threonine 256 the chain is on the periplasmic side. The helical transmembrane segment at tyrosine 257–valine 277 threads the bilayer. The Cytoplasmic portion of the chain corresponds to threonine 278–glutamate 280. Residues threonine 281–leucine 301 traverse the membrane as a helical segment. Residues glutamine 302–glutamate 304 are Periplasmic-facing. A helical transmembrane segment spans residues leucine 305–proline 325. Over leucine 326–alanine 343 the chain is Cytoplasmic. Residues isoleucine 344 to leucine 364 form a helical membrane-spanning segment. The Periplasmic portion of the chain corresponds to alanine 365–valine 366. A helical transmembrane segment spans residues methionine 367 to isoleucine 387. The Cytoplasmic portion of the chain corresponds to threonine 388–histidine 397.

This sequence belongs to the major facilitator superfamily. LplT (TC 2.A.1.42) family.

It localises to the cell inner membrane. Its function is as follows. Catalyzes the facilitated diffusion of 2-acyl-glycero-3-phosphoethanolamine (2-acyl-GPE) into the cell. This Escherichia coli O8 (strain IAI1) protein is Lysophospholipid transporter LplT.